The primary structure comprises 381 residues: Probable serine/threonine-protein kinase PBL22 (381 aa).

The S-palmitoyl cysteine moiety is linked to residue cysteine 3. Residue threonine 64 is modified to Phosphothreonine. One can recognise a Protein kinase domain in the interval 75–351 (FREGNIIGKG…GDVVVAFEYI (277 aa)). Residues 81–89 (IGKGGFGSV) and lysine 103 each bind ATP. Tyrosine 148 is subject to Phosphotyrosine. Aspartate 201 functions as the Proton acceptor in the catalytic mechanism. A Phosphoserine modification is found at serine 235. Phosphothreonine occurs at positions 236 and 241. Residue tyrosine 249 is modified to Phosphotyrosine. Residues 361–381 (RRTARKSTDSNRLRRETKQSY) are disordered.

The protein belongs to the protein kinase superfamily. Ser/Thr protein kinase family. In terms of processing, palmitoylation at Cys-3 and Cys-6 are required for plasma membrane location.

It localises to the cell membrane. The enzyme catalyses L-seryl-[protein] + ATP = O-phospho-L-seryl-[protein] + ADP + H(+). It carries out the reaction L-threonyl-[protein] + ATP = O-phospho-L-threonyl-[protein] + ADP + H(+). Its function is as follows. May be involved in plant defense signaling. The chain is Probable serine/threonine-protein kinase PBL22 from Arabidopsis thaliana (Mouse-ear cress).